A 342-amino-acid polypeptide reads, in one-letter code: L-threonine 3-dehydrogenase (342 aa).

Cys-38 lines the Zn(2+) pocket. Catalysis depends on charge relay system residues Thr-40 and His-43. His-63, Glu-64, Cys-93, Cys-96, Cys-99, and Cys-107 together coordinate Zn(2+). NAD(+)-binding positions include Val-175, Asp-195, Arg-200, 262 to 264 (LGI), and 286 to 287 (IY).

This sequence belongs to the zinc-containing alcohol dehydrogenase family. In terms of assembly, homotetramer. Requires Zn(2+) as cofactor.

Its subcellular location is the cytoplasm. The catalysed reaction is L-threonine + NAD(+) = (2S)-2-amino-3-oxobutanoate + NADH + H(+). Its pathway is amino-acid degradation; L-threonine degradation via oxydo-reductase pathway; glycine from L-threonine: step 1/2. Functionally, catalyzes the NAD(+)-dependent oxidation of L-threonine to 2-amino-3-ketobutyrate. This chain is L-threonine 3-dehydrogenase, found in Coxiella burnetii (strain Dugway 5J108-111).